Here is a 452-residue protein sequence, read N- to C-terminus: Low-affinity putrescine importer PlaP (452 aa).

Topologically, residues 1-16 are cytoplasmic; that stretch reads MSHNVTPNTSRVELRK. A helical transmembrane segment spans residues 17 to 37; sequence TLTLVPVVMMGLAYMQPMTLF. At 38-48 the chain is on the periplasmic side; the sequence is DTFGIVSGLTD. The chain crosses the membrane as a helical span at residues 49–69; sequence GHVPTAYAFALIAILFTALSY. At 70-95 the chain is on the cytoplasmic side; it reads GKLVRRYPSAGSAYTYAQKSISPTVG. The chain crosses the membrane as a helical span at residues 96 to 116; the sequence is FMVGWSSLLDYLFAPMINILL. Residues 117-123 lie on the Periplasmic side of the membrane; that stretch reads AKIYFEA. The helical transmembrane segment at 124–144 threads the bilayer; that stretch reads LVPSIPSWMFVVALVAFMTAF. Residues 145–158 lie on the Cytoplasmic side of the membrane; it reads NLRSLKSVANFNTV. Residues 159–179 traverse the membrane as a helical segment; the sequence is IVVLQVVLIAVILGMVVYGVF. Residues 180-199 lie on the Periplasmic side of the membrane; that stretch reads EGEGAGTLASTRPFWSGDAH. A helical transmembrane segment spans residues 200-220; the sequence is VIPMITGATILCFSFTGFDGI. At 221–237 the chain is on the cytoplasmic side; the sequence is SNLSEETKDAERVIPRA. Residues 238 to 258 traverse the membrane as a helical segment; the sequence is IFLTALIGGMIFIFATYFLQL. The Periplasmic portion of the chain corresponds to 259–283; that stretch reads YFPDISRFKDPDASQPEIMLYVAGK. A helical membrane pass occupies residues 284 to 304; the sequence is AFQVGALIFSTITVLASGMAA. Over 305–339 the chain is Cytoplasmic; that stretch reads HAGVARLMYVMGRDGVFPKSFFGYVHPKWRTPAMN. The next 2 helical transmembrane spans lie at 340–360 and 361–381; these read IILV…MATA and LINF…ISQF. Residues 382-394 lie on the Cytoplasmic side of the membrane; sequence WIREKRNKTLKDH. The helical transmembrane segment at 395-415 threads the bilayer; that stretch reads FQYLFLPMCGALTVGALWVNL. Over 416 to 417 the chain is Periplasmic; sequence EE. The helical transmembrane segment at 418–438 threads the bilayer; sequence SSMVLGLIWAAIGLIYLACVT. Over 439–452 the chain is Cytoplasmic; it reads KSFRNPVPQYEDVA.

It belongs to the amino acid-polyamine-organocation (APC) superfamily.

Its subcellular location is the cell inner membrane. It carries out the reaction putrescine(in) + H(+)(in) = putrescine(out) + H(+)(out). Its function is as follows. Putrescine importer. This Escherichia coli O157:H7 protein is Low-affinity putrescine importer PlaP (plaP).